The primary structure comprises 492 residues: Catalase isozyme A (492 aa).

The tract at residues 1–23 (MDPCKFRPSSSFDTKTTTTNAGA) is disordered. Residues 8–21 (PSSSFDTKTTTTNA) show a composition bias toward polar residues. Residues His-65 and Asn-138 contribute to the active site. Tyr-348 contacts heme.

The protein belongs to the catalase family. In terms of assembly, homotetramer. Heme serves as cofactor.

It is found in the peroxisome. Its subcellular location is the glyoxysome. It carries out the reaction 2 H2O2 = O2 + 2 H2O. Functionally, occurs in almost all aerobically respiring organisms and serves to protect cells from the toxic effects of hydrogen peroxide. The protein is Catalase isozyme A of Oryza sativa subsp. indica (Rice).